Consider the following 293-residue polypeptide: Probable metal transport system membrane protein CT_417 (293 aa).

7 helical membrane passes run 18–38 (SLLAAFGASIAAGIIGSYIVV), 41–61 (IVSISGSIAHSILGGVGIALW), 68–88 (LPISPLHGAIASAIFVAICIG), 101–121 (IISMIWSIGMAIGIICISKLP), 135–155 (ILWVTPQDLYFLGILDLFIVA), 187–207 (LLLILTAITTVVLMYVMGVIL), and 242–262 (FLGIMLAYLLDLPVGPVIAIL).

It belongs to the ABC-3 integral membrane protein family.

It localises to the cell inner membrane. Functionally, part of an ATP-driven transport system CT_415/CT_416/CT_417 for a metal. The polypeptide is Probable metal transport system membrane protein CT_417 (Chlamydia trachomatis serovar D (strain ATCC VR-885 / DSM 19411 / UW-3/Cx)).